Reading from the N-terminus, the 571-residue chain is Quinone-dependent D-lactate dehydrogenase (571 aa).

Positions 42 to 213 (GQGDALAVVF…SKLDDDRIKD (172 aa)) constitute an FAD-binding PCMH-type domain. FAD contacts are provided by residues 76-80 (AANTG), 84-85 (GS), Gly-143, Ser-150, Gly-160, and Val-262. A disordered region spans residues 546–571 (RENDPTNSMNPGIGKTSKRKNWQEVE).

The protein belongs to the quinone-dependent D-lactate dehydrogenase family. FAD serves as cofactor.

The protein resides in the cell inner membrane. The enzyme catalyses (R)-lactate + a quinone = a quinol + pyruvate. Its activity is regulated as follows. Inhibited by 2-hydroxy-3-butynoic acid, but not by p-chloromercuribenzoate, n-ethylmaleimide, or 5,5'-dithiobis(2-nitrobenzoic acid). Catalyzes the oxidation of D-lactate to pyruvate. Electrons derived from D-lactate oxidation are transferred to the ubiquinone/cytochrome electron transfer chain, where they may be used to provide energy for the active transport of a variety of amino acids and sugars across the membrane. The polypeptide is Quinone-dependent D-lactate dehydrogenase (Escherichia coli (strain K12)).